We begin with the raw amino-acid sequence, 382 residues long: Protein phosphatase 1A (382 aa).

The N-myristoyl glycine moiety is linked to residue glycine 2. One can recognise a PPM-type phosphatase domain in the interval 23 to 291 (RYGLSSMQGW…DNMSVILICF (269 aa)). Residues aspartate 60, glycine 61, aspartate 239, and aspartate 282 each coordinate Mn(2+). Residues serine 375 and serine 377 each carry the phosphoserine modification.

This sequence belongs to the PP2C family. In terms of assembly, monomer. Interacts with SMAD2; the interaction dephosphorylates SMAD2 in its C-terminal SXS motif resulting in disruption of the SMAD2/SMAD4 complex, SMAD2 nuclear export and termination of the TGF-beta-mediated signaling. Interacts with SMAD2; the interaction dephosphorylates SMAD2 in its C-terminal SXS motif resulting in disruption of the SMAD2/SMAD4 complex, SMAD2 nuclear export and termination of the TGF-beta-mediated signaling. Interacts with the phosphorylated form of IKBKB/IKKB. Mg(2+) serves as cofactor. It depends on Mn(2+) as a cofactor. Post-translationally, N-myristoylation is essential for the recognition of its substrates for dephosphorylation.

The protein localises to the nucleus. It localises to the cytoplasm. It is found in the cytosol. Its subcellular location is the membrane. The enzyme catalyses O-phospho-L-seryl-[protein] + H2O = L-seryl-[protein] + phosphate. The catalysed reaction is O-phospho-L-threonyl-[protein] + H2O = L-threonyl-[protein] + phosphate. Enzyme with a broad specificity. Negatively regulates TGF-beta signaling through dephosphorylating SMAD2 and SMAD3, resulting in their dissociation from SMAD4, nuclear export of the SMADs and termination of the TGF-beta-mediated signaling. Dephosphorylates PRKAA1 and PRKAA2. Plays an important role in the termination of TNF-alpha-mediated NF-kappa-B activation through dephosphorylating and inactivating IKBKB/IKKB. The chain is Protein phosphatase 1A (PPM1A) from Oryctolagus cuniculus (Rabbit).